Consider the following 590-residue polypeptide: Fucose-1-phosphate guanylyltransferase (590 aa).

In terms of tissue distribution, expressed at highest levels in brain, moderately in testis, ovary and kidney, and weakly in liver, spleen, heart and lung.

The protein resides in the cytoplasm. It catalyses the reaction beta-L-fucose 1-phosphate + GTP + H(+) = GDP-beta-L-fucose + diphosphate. Catalyzes the formation of GDP-L-fucose from GTP and L-fucose-1-phosphate. Functions as a salvage pathway to reutilize L-fucose arising from the turnover of glycoproteins and glycolipids. The chain is Fucose-1-phosphate guanylyltransferase from Mus musculus (Mouse).